Consider the following 498-residue polypeptide: XK-related protein 4 (498 aa).

Positions 24 to 46 are disordered; the sequence is SEHSGSVQGLHPGAQPDSAGAGD. The next 2 membrane-spanning stretches (helical) occupy residues 81–101 and 111–131; these read CLWI…DVWL and YWWF…VQLF. A disordered region spans residues 166–203; it reads SHGDVTAQHHPATPQRQASTASRNTTTNSTASTGLGPR. A compositionally biased stretch (low complexity) spans 183 to 198; it reads ASTASRNTTTNSTAST. 2 consecutive transmembrane segments (helical) span residues 302-322 and 332-352; these read LFIY…LWYL and FAVP…VFML.

It belongs to the XK family.

Its subcellular location is the cell membrane. It carries out the reaction a 1,2-diacyl-sn-glycero-3-phospho-L-serine(in) = a 1,2-diacyl-sn-glycero-3-phospho-L-serine(out). Its function is as follows. Phospholipid scramblase that promotes phosphatidylserine exposure on apoptotic cell surface. Phosphatidylserine is a specific marker only present at the surface of apoptotic cells and acts as a specific signal for engulfment. This Tetraodon nigroviridis (Spotted green pufferfish) protein is XK-related protein 4.